A 493-amino-acid chain; its full sequence is Cobyric acid synthase (493 aa).

The 195-residue stretch at 246–440 folds into the GATase cobBQ-type domain; that stretch reads PIDIAVIKMP…IHGVFDGVVF (195 aa). Cysteine 326 acts as the Nucleophile in catalysis. Residue histidine 432 is part of the active site.

It belongs to the CobB/CobQ family. CobQ subfamily.

The protein operates within cofactor biosynthesis; adenosylcobalamin biosynthesis. Its function is as follows. Catalyzes amidations at positions B, D, E, and G on adenosylcobyrinic A,C-diamide. NH(2) groups are provided by glutamine, and one molecule of ATP is hydrogenolyzed for each amidation. This chain is Cobyric acid synthase, found in Clostridium botulinum (strain ATCC 19397 / Type A).